The primary structure comprises 286 residues: NAD kinase (286 aa).

The active-site Proton acceptor is the aspartate 74. Residues 74–75 (DG), 148–149 (ND), aspartate 178, alanine 186, 189–194 (TAYNLS), and glutamine 244 contribute to the NAD(+) site.

The protein belongs to the NAD kinase family. A divalent metal cation serves as cofactor.

It is found in the cytoplasm. The enzyme catalyses NAD(+) + ATP = ADP + NADP(+) + H(+). Its function is as follows. Involved in the regulation of the intracellular balance of NAD and NADP, and is a key enzyme in the biosynthesis of NADP. Catalyzes specifically the phosphorylation on 2'-hydroxyl of the adenosine moiety of NAD to yield NADP. The sequence is that of NAD kinase from Campylobacter jejuni subsp. jejuni serotype O:23/36 (strain 81-176).